The primary structure comprises 720 residues: Methionine--tRNA ligase (720 aa).

The 'HIGH' region motif lies at 27-37; sequence PYANGQIHIGH. The Zn(2+) site is built by Cys-158, Cys-161, Cys-171, and Cys-174. Positions 348 to 352 match the 'KMSKS' region motif; it reads KMSKS. Position 351 (Lys-351) interacts with ATP. One can recognise a tRNA-binding domain in the interval 614-720; it reads DFAKIDLRIA…SGAKPGMRVK (107 aa).

The protein belongs to the class-I aminoacyl-tRNA synthetase family. MetG type 1 subfamily. Homodimer. Zn(2+) serves as cofactor.

It localises to the cytoplasm. The enzyme catalyses tRNA(Met) + L-methionine + ATP = L-methionyl-tRNA(Met) + AMP + diphosphate. Functionally, is required not only for elongation of protein synthesis but also for the initiation of all mRNA translation through initiator tRNA(fMet) aminoacylation. This Burkholderia lata (strain ATCC 17760 / DSM 23089 / LMG 22485 / NCIMB 9086 / R18194 / 383) protein is Methionine--tRNA ligase.